We begin with the raw amino-acid sequence, 105 residues long: Small cysteine and glycine repeat-containing protein 4 (105 aa).

The segment at 4–87 is 14 X 2 AA repeats of CG; the sequence is CGCGSCGGCG…RRTCGSCGCG (84 aa).

Belongs to the KRTAP type 28 family.

Its function is as follows. In the hair cortex, hair keratin intermediate filaments are embedded in an interfilamentous matrix, consisting of hair keratin-associated proteins (KRTAP), which are essential for the formation of a rigid and resistant hair shaft through their extensive disulfide bond cross-linking with abundant cysteine residues of hair keratins. The matrix proteins include the high-sulfur and high-glycine-tyrosine keratins. The protein is Small cysteine and glycine repeat-containing protein 4 of Homo sapiens (Human).